The primary structure comprises 267 residues: Glucosamine-6-phosphate deaminase (267 aa).

The Proton acceptor; for enolization step role is filled by D72. D141 serves as the catalytic For ring-opening step. Residue H143 is the Proton acceptor; for ring-opening step of the active site. E148 (for ring-opening step) is an active-site residue.

It belongs to the glucosamine/galactosamine-6-phosphate isomerase family. NagB subfamily. In terms of assembly, homohexamer.

It carries out the reaction alpha-D-glucosamine 6-phosphate + H2O = beta-D-fructose 6-phosphate + NH4(+). The protein operates within amino-sugar metabolism; N-acetylneuraminate degradation; D-fructose 6-phosphate from N-acetylneuraminate: step 5/5. Its activity is regulated as follows. Allosterically activated by N-acetylglucosamine 6-phosphate (GlcNAc6P). Catalyzes the reversible isomerization-deamination of glucosamine 6-phosphate (GlcN6P) to form fructose 6-phosphate (Fru6P) and ammonium ion. The protein is Glucosamine-6-phosphate deaminase of Actinobacillus pleuropneumoniae serotype 5b (strain L20).